The sequence spans 449 residues: Xylose isomerase (449 aa).

Active-site residues include H103 and D106. Mg(2+)-binding residues include E234, E270, H273, D298, D309, D311, and D342.

This sequence belongs to the xylose isomerase family. As to quaternary structure, homotetramer. It depends on Mg(2+) as a cofactor.

Its subcellular location is the cytoplasm. It catalyses the reaction alpha-D-xylose = alpha-D-xylulofuranose. This is Xylose isomerase from Levilactobacillus brevis (strain ATCC 367 / BCRC 12310 / CIP 105137 / JCM 1170 / LMG 11437 / NCIMB 947 / NCTC 947) (Lactobacillus brevis).